The sequence spans 329 residues: MNLIWGFLILILVLIFLGVFFSFVPLGLWISALAAGVSIRITDLIGMRLRRVPPGVIINSLIKAHKAGLSEVTLDKLEAHYLAGGNVDKVVNALIAAQRAGIPLTFEKAAAIDLAGRDVLEAVQMSVNPKVIETPVVAAVAKDGIELKAKARVTVRANIERLVGGAGEATIIARVGEGIVTTIGSAESYKEVLENPDSISKTVLAKGLDAGTAFEIVSIDIADVDVGNNVGARLKMDQAEADMRIAQAQAESRRALAIAREQEMKALTQEMRARLIEAEKEVPLAIAEALRSGKIGVLDYYTLKNIIADTAMREAISKLGQKEEEGRKD.

A helical transmembrane segment spans residues 4-24 (IWGFLILILVLIFLGVFFSFV).

The protein belongs to the flotillin-like FloA family. As to quaternary structure, homooligomerizes.

The protein resides in the cell membrane. It is found in the membrane raft. Its function is as follows. Found in functional membrane microdomains (FMM) that may be equivalent to eukaryotic membrane rafts. FMMs are highly dynamic and increase in number as cells age. Flotillins are thought to be important factors in membrane fluidity. The chain is Flotillin-like protein FloA from Dictyoglomus turgidum (strain DSM 6724 / Z-1310).